The primary structure comprises 128 residues: uncharacterized protein (128 aa).

The 69-residue stretch at 6–74 (GSKLQGKITG…KDGKIGLSIK (69 aa)) folds into the S1 motif domain. The tract at residues 72 to 128 (SIKKAKDRPQARPRNDFRPKESFEQKMNKFLKDSEDRLSSLKRNTESKRGGRGARRG) is disordered. A compositionally biased stretch (basic and acidic residues) spans 78–120 (DRPQARPRNDFRPKESFEQKMNKFLKDSEDRLSSLKRNTESKR).

It belongs to the peptidase U57 family.

This is an uncharacterized protein from Bacillus subtilis (strain 168).